A 327-amino-acid chain; its full sequence is Aspartate--ammonia ligase (327 aa).

The protein belongs to the class-II aminoacyl-tRNA synthetase family. AsnA subfamily.

The protein localises to the cytoplasm. The catalysed reaction is L-aspartate + NH4(+) + ATP = L-asparagine + AMP + diphosphate + H(+). It participates in amino-acid biosynthesis; L-asparagine biosynthesis; L-asparagine from L-aspartate (ammonia route): step 1/1. This chain is Aspartate--ammonia ligase, found in Mycoplasmoides gallisepticum (strain R(low / passage 15 / clone 2)) (Mycoplasma gallisepticum).